The sequence spans 2273 residues: Acetyl-CoA carboxylase, mitochondrial (2273 aa).

A mitochondrion-targeting transit peptide spans 1-104 (KGKTITHGQS…RGNIHKHTRL (104 aa)). Residues 134-635 (VISKILIANN…STGWLDDLIL (502 aa)) form the Biotin carboxylation domain. The ATP-grasp domain maps to 292–484 (KTNFVSVPDD…LPATQLQIAM (193 aa)). 332-337 (GGGGKG) contacts ATP. Residue R459 is part of the active site. Positions 763–837 (LEAELNPTQV…EAGDVIAKLT (75 aa)) constitute a Biotinyl-binding domain. K804 is subject to N6-biotinyllysine. The CoA carboxyltransferase N-terminal domain occupies 1532–1867 (PYSVKDWLQP…KRDMSPPLLE (336 aa)). The interval 1532 to 2187 (PYSVKDWLQP…EGQVIKRLQK (656 aa)) is carboxyltransferase. Residues R1776, K2080, and R2082 each contribute to the CoA site. In terms of domain architecture, CoA carboxyltransferase C-terminal spans 1871-2187 (RWDRDVDFKP…EGQVIKRLQK (317 aa)).

Biotin is required as a cofactor.

Its subcellular location is the mitochondrion. The catalysed reaction is hydrogencarbonate + acetyl-CoA + ATP = malonyl-CoA + ADP + phosphate + H(+). It catalyses the reaction N(6)-biotinyl-L-lysyl-[protein] + hydrogencarbonate + ATP = N(6)-carboxybiotinyl-L-lysyl-[protein] + ADP + phosphate + H(+). It participates in lipid metabolism; malonyl-CoA biosynthesis; malonyl-CoA from acetyl-CoA: step 1/1. Functionally, catalyzes the rate-limiting reaction in the mitochondrial fatty acid synthesis (FAS) type II pathway. Responsible for the production of the mitochondrial malonyl-CoA, used for the biosynthesis of the cofactor lipoic acid. This protein carries three functions: biotin carboxyl carrier protein, biotin carboxylase, and carboxyltransferase. In Saccharomyces cerevisiae (strain ATCC 204508 / S288c) (Baker's yeast), this protein is Acetyl-CoA carboxylase, mitochondrial (HFA1).